The primary structure comprises 120 residues: Large ribosomal subunit protein bL17 (120 aa).

It belongs to the bacterial ribosomal protein bL17 family. As to quaternary structure, part of the 50S ribosomal subunit. Contacts protein L32.

This Desulforapulum autotrophicum (strain ATCC 43914 / DSM 3382 / VKM B-1955 / HRM2) (Desulfobacterium autotrophicum) protein is Large ribosomal subunit protein bL17.